The sequence spans 301 residues: Amine sulfotransferase (301 aa).

A 3'-phosphoadenylyl sulfate-binding site is contributed by 46 to 51 (KSGTVW). The Proton acceptor role is filled by His-101. Residues Arg-123, Ser-131, Tyr-186, 220-225 (ATFENM), and 252-254 (RKG) each bind 3'-phosphoadenylyl sulfate.

This sequence belongs to the sulfotransferase 1 family. Expressed in male liver.

It is found in the cytoplasm. The enzyme catalyses a primary amine + 3'-phosphoadenylyl sulfate = a sulfamate + adenosine 3',5'-bisphosphate + 2 H(+). Sulfotransferase that utilizes 3'-phospho-5'-adenylyl sulfate (PAPS) as sulfonate donor to catalyze the N-sulfonation of amines (PTHP, aniline, 4-chloroaniline, 2-naphthylamine). The polypeptide is Amine sulfotransferase (SULT3A1) (Oryctolagus cuniculus (Rabbit)).